Reading from the N-terminus, the 237-residue chain is Ribosomal RNA small subunit methyltransferase G (237 aa).

Residues G78, F83, 129–130 (AE), and R148 each bind S-adenosyl-L-methionine. The interval 218–237 (KKETPNKYPRKAGMPNKRPL) is disordered.

It belongs to the methyltransferase superfamily. RNA methyltransferase RsmG family.

It localises to the cytoplasm. In terms of biological role, specifically methylates the N7 position of a guanine in 16S rRNA. This chain is Ribosomal RNA small subunit methyltransferase G, found in Streptococcus pneumoniae (strain JJA).